The following is a 360-amino-acid chain: tRNA-specific 2-thiouridylase MnmA (360 aa).

Residues 8 to 15 (GMSGGVDS) and Met34 each bind ATP. Residues 94-96 (NPD) form an interaction with target base in tRNA region. Residue Cys99 is the Nucleophile of the active site. Cys99 and Cys195 form a disulfide bridge. Gly123 contacts ATP. Residues 145-147 (KDQ) form an interaction with tRNA region. Catalysis depends on Cys195, which acts as the Cysteine persulfide intermediate. The interaction with tRNA stretch occupies residues 307–308 (RY).

This sequence belongs to the MnmA/TRMU family.

The protein localises to the cytoplasm. It carries out the reaction S-sulfanyl-L-cysteinyl-[protein] + uridine(34) in tRNA + AH2 + ATP = 2-thiouridine(34) in tRNA + L-cysteinyl-[protein] + A + AMP + diphosphate + H(+). Its function is as follows. Catalyzes the 2-thiolation of uridine at the wobble position (U34) of tRNA, leading to the formation of s(2)U34. The sequence is that of tRNA-specific 2-thiouridylase MnmA from Methylobacillus flagellatus (strain ATCC 51484 / DSM 6875 / VKM B-1610 / KT).